We begin with the raw amino-acid sequence, 164 residues long: Phosphopantetheine adenylyltransferase (164 aa).

Residue Ser-9 coordinates substrate. ATP-binding positions include 9 to 10 (SF) and His-17. Residues Lys-41, Leu-73, and Lys-87 each coordinate substrate. Residues 88 to 90 (GLR), Glu-98, and 123 to 129 (HSFLSSS) each bind ATP.

This sequence belongs to the bacterial CoaD family. As to quaternary structure, homohexamer. Mg(2+) is required as a cofactor.

The protein localises to the cytoplasm. It catalyses the reaction (R)-4'-phosphopantetheine + ATP + H(+) = 3'-dephospho-CoA + diphosphate. The protein operates within cofactor biosynthesis; coenzyme A biosynthesis; CoA from (R)-pantothenate: step 4/5. In terms of biological role, reversibly transfers an adenylyl group from ATP to 4'-phosphopantetheine, yielding dephospho-CoA (dPCoA) and pyrophosphate. This is Phosphopantetheine adenylyltransferase from Rubrobacter xylanophilus (strain DSM 9941 / JCM 11954 / NBRC 16129 / PRD-1).